Consider the following 350-residue polypeptide: Uroporphyrinogen decarboxylase (350 aa).

Residues 23–27, Asp-72, Tyr-149, Ser-204, and His-318 contribute to the substrate site; that span reads RQAGR.

It belongs to the uroporphyrinogen decarboxylase family. In terms of assembly, homodimer.

The protein resides in the cytoplasm. The enzyme catalyses uroporphyrinogen III + 4 H(+) = coproporphyrinogen III + 4 CO2. It participates in porphyrin-containing compound metabolism; protoporphyrin-IX biosynthesis; coproporphyrinogen-III from 5-aminolevulinate: step 4/4. Catalyzes the decarboxylation of four acetate groups of uroporphyrinogen-III to yield coproporphyrinogen-III. This is Uroporphyrinogen decarboxylase from Carboxydothermus hydrogenoformans (strain ATCC BAA-161 / DSM 6008 / Z-2901).